Consider the following 451-residue polypeptide: Serine--tRNA ligase, cytoplasmic (451 aa).

236–238 serves as a coordination point for L-serine; it reads TSE. ATP is bound by residues 267 to 269 and Val283; that span reads RKE. Glu290 lines the L-serine pocket. 354–357 is a binding site for ATP; sequence ELVS. Residue Thr392 participates in L-serine binding.

Belongs to the class-II aminoacyl-tRNA synthetase family. Type-1 seryl-tRNA synthetase subfamily. In terms of assembly, homodimer. The tRNA molecule binds across the dimer.

It localises to the cytoplasm. The enzyme catalyses tRNA(Ser) + L-serine + ATP = L-seryl-tRNA(Ser) + AMP + diphosphate + H(+). The catalysed reaction is tRNA(Sec) + L-serine + ATP = L-seryl-tRNA(Sec) + AMP + diphosphate + H(+). Its pathway is aminoacyl-tRNA biosynthesis; selenocysteinyl-tRNA(Sec) biosynthesis; L-seryl-tRNA(Sec) from L-serine and tRNA(Sec): step 1/1. Its function is as follows. Catalyzes the attachment of serine to tRNA(Ser). Is also able to aminoacylate tRNA(Sec) with serine, to form the misacylated tRNA L-seryl-tRNA(Sec), which will be further converted into selenocysteinyl-tRNA(Sec). This is Serine--tRNA ligase, cytoplasmic (serS) from Dictyostelium discoideum (Social amoeba).